Here is a 335-residue protein sequence, read N- to C-terminus: Transcription factor IIIA (335 aa).

9 consecutive C2H2-type zinc fingers follow at residues 13–37 (YICS…LCKH), 43–67 (FPCT…SMTH), 73–98 (CKCD…QRAH), 105–129 (YECY…QYIH), 135–159 (FKCN…EKVH), 162–188 (YPCQ…AASH), 192–214 (TICD…KRTH), 221–246 (YKCP…LSFH), and 252–276 (FACG…ANTH). The span at 269–280 (LDRHANTHDPEK) shows a compositional bias: basic and acidic residues. The disordered stretch occupies residues 269-335 (LDRHANTHDP…ATAMQNLSIK (67 aa)). A compositionally biased stretch (basic residues) spans 281–292 (KKMKKPRPKKSL).

The protein localises to the nucleus. Its function is as follows. Involved in ribosomal large subunit biogenesis. Interacts with the internal control region (ICR) of approximately 50 bases within the 5S RNA genes, is required for correct transcription of these genes by RNA polymerase III. Also binds the transcribed 5S RNA's. The sequence is that of Transcription factor IIIA (gtf3a) from Lithobates pipiens (Northern leopard frog).